A 284-amino-acid chain; its full sequence is 4-hydroxybenzoate octaprenyltransferase (284 aa).

The next 9 membrane-spanning stretches (helical) occupy residues 19–39 (IPIL…SHGL), 42–62 (ISYL…GCII), 85–105 (GQLS…VAFI), 107–127 (VLFL…LAIL), 134–154 (FFAI…FMAF), 165–185 (AWIF…IYAL), 211–231 (ILLF…YCDF), 233–253 (SFFY…YFLY), and 261–281 (CINA…MAVI).

Belongs to the UbiA prenyltransferase family. Requires Mg(2+) as cofactor.

Its subcellular location is the cell inner membrane. The enzyme catalyses all-trans-octaprenyl diphosphate + 4-hydroxybenzoate = 4-hydroxy-3-(all-trans-octaprenyl)benzoate + diphosphate. It functions in the pathway cofactor biosynthesis; ubiquinone biosynthesis. Its function is as follows. Catalyzes the prenylation of para-hydroxybenzoate (PHB) with an all-trans polyprenyl group. Mediates the second step in the final reaction sequence of ubiquinone-8 (UQ-8) biosynthesis, which is the condensation of the polyisoprenoid side chain with PHB, generating the first membrane-bound Q intermediate 3-octaprenyl-4-hydroxybenzoate. In Francisella tularensis subsp. novicida (strain U112), this protein is 4-hydroxybenzoate octaprenyltransferase.